We begin with the raw amino-acid sequence, 179 residues long: UPF0227 protein VIBHAR_01524 (179 aa).

This sequence belongs to the UPF0227 family.

The polypeptide is UPF0227 protein VIBHAR_01524 (Vibrio campbellii (strain ATCC BAA-1116)).